The following is a 526-amino-acid chain: Exodeoxyribonuclease 7 large subunit (526 aa).

The interval A497–F526 is disordered.

This sequence belongs to the XseA family. As to quaternary structure, heterooligomer composed of large and small subunits.

The protein localises to the cytoplasm. It catalyses the reaction Exonucleolytic cleavage in either 5'- to 3'- or 3'- to 5'-direction to yield nucleoside 5'-phosphates.. Bidirectionally degrades single-stranded DNA into large acid-insoluble oligonucleotides, which are then degraded further into small acid-soluble oligonucleotides. The polypeptide is Exodeoxyribonuclease 7 large subunit (Rhizobium etli (strain ATCC 51251 / DSM 11541 / JCM 21823 / NBRC 15573 / CFN 42)).